The following is a 209-amino-acid chain: Uracil phosphoribosyltransferase (209 aa).

5-phospho-alpha-D-ribose 1-diphosphate-binding positions include Arg79, Arg104, and 131-139; that span reads DPMLATGGS. Uracil contacts are provided by residues Ile194 and 199-201; that span reads GDA. Asp200 serves as a coordination point for 5-phospho-alpha-D-ribose 1-diphosphate.

It belongs to the UPRTase family. Mg(2+) serves as cofactor.

It carries out the reaction UMP + diphosphate = 5-phospho-alpha-D-ribose 1-diphosphate + uracil. The protein operates within pyrimidine metabolism; UMP biosynthesis via salvage pathway; UMP from uracil: step 1/1. Its activity is regulated as follows. Allosterically activated by GTP. Functionally, catalyzes the conversion of uracil and 5-phospho-alpha-D-ribose 1-diphosphate (PRPP) to UMP and diphosphate. The protein is Uracil phosphoribosyltransferase of Streptococcus agalactiae serotype III (strain NEM316).